A 91-amino-acid polypeptide reads, in one-letter code: Putative pterin-4-alpha-carbinolamine dehydratase (91 aa).

The protein belongs to the pterin-4-alpha-carbinolamine dehydratase family.

The enzyme catalyses (4aS,6R)-4a-hydroxy-L-erythro-5,6,7,8-tetrahydrobiopterin = (6R)-L-erythro-6,7-dihydrobiopterin + H2O. The chain is Putative pterin-4-alpha-carbinolamine dehydratase from Sulfolobus acidocaldarius (strain ATCC 33909 / DSM 639 / JCM 8929 / NBRC 15157 / NCIMB 11770).